The sequence spans 111 residues: Inner membrane protein YdgC (111 aa).

Topologically, residues 1–26 (MGLVIKAALGALVVLLIGVLAKTKNY) are cytoplasmic. The helical transmembrane segment at 27–47 (YIAGLIPLFPTFALIAHYIVA) threads the bilayer. Over 48–58 (SERGIEALRAT) the chain is Periplasmic. The helical transmembrane segment at 59-79 (IIFSMWSIIPYFVYLVSLWYF) threads the bilayer. Residues 80–87 (TGMMRLPA) are Cytoplasmic-facing. Residues 88 to 108 (AFVGSVACWGISAWVLIICWI) traverse the membrane as a helical segment. Residues 109–111 (KLH) lie on the Periplasmic side of the membrane.

The protein to P.aeruginosa GlpM.

It localises to the cell inner membrane. This Escherichia coli O157:H7 protein is Inner membrane protein YdgC (ydgC).